A 360-amino-acid polypeptide reads, in one-letter code: Cyclin-D1-binding protein 1 (360 aa).

Ala-2 carries the N-acetylalanine modification. 2 interaction with TCF3 regions span residues 2 to 184 and 150 to 360; these read ASAT…VDFV and ISYN…ELEL. Interaction with RPLP0 regions lie at residues 2–190 and 240–360; these read ASAT…AHEE and LIIP…ELEL. Residues 2–208 are required for interaction with CCND1; that stretch reads ASATAPAAAV…DPYSGLLNDT (207 aa).

Belongs to the CCNDBP1 family. As to quaternary structure, interacts with CCND1 and GRAP2. May also interact with COPS5, RPLP0, SIRT6, SYF2 and TCF3. Phosphorylated.

It localises to the cytoplasm. The protein resides in the nucleus. Functionally, may negatively regulate cell cycle progression. May act at least in part via inhibition of the cyclin-D1/CDK4 complex, thereby preventing phosphorylation of RB1 and blocking E2F-dependent transcription. In Pongo abelii (Sumatran orangutan), this protein is Cyclin-D1-binding protein 1 (CCNDBP1).